A 288-amino-acid polypeptide reads, in one-letter code: Glycine--tRNA ligase alpha subunit (288 aa).

The protein belongs to the class-II aminoacyl-tRNA synthetase family. Tetramer of two alpha and two beta subunits.

Its subcellular location is the cytoplasm. The enzyme catalyses tRNA(Gly) + glycine + ATP = glycyl-tRNA(Gly) + AMP + diphosphate. The chain is Glycine--tRNA ligase alpha subunit from Rickettsia peacockii (strain Rustic).